An 89-amino-acid chain; its full sequence is Large ribosomal subunit protein eL31 (89 aa).

Belongs to the eukaryotic ribosomal protein eL31 family.

The polypeptide is Large ribosomal subunit protein eL31 (rpl31e) (Thermoplasma acidophilum (strain ATCC 25905 / DSM 1728 / JCM 9062 / NBRC 15155 / AMRC-C165)).